A 102-amino-acid chain; its full sequence is RNA-binding protein Hfq (102 aa).

Residues 9–68 (DPFLNALRRERVPVSIYLVNGIKLQGQIESFDQFVILLKNTVSQMVYKHAISTVVPSRPV) enclose the Sm domain. The tract at residues 63–102 (VPSRPVSHHSNNAGGGSSNYHHGGSAQGSSAPQQDSDDAE) is disordered. A compositionally biased stretch (low complexity) spans 70-86 (HHSNNAGGGSSNYHHGG).

Belongs to the Hfq family. Homohexamer.

RNA chaperone that binds small regulatory RNA (sRNAs) and mRNAs to facilitate mRNA translational regulation in response to envelope stress, environmental stress and changes in metabolite concentrations. Also binds with high specificity to tRNAs. The chain is RNA-binding protein Hfq from Klebsiella pneumoniae (strain 342).